Consider the following 421-residue polypeptide: Transcription factor rglT (421 aa).

The tract at residues 1–29 (MQYEAYQWGQSHPTSTSGSMLQDTPTAAS) is disordered. Over residues 8–29 (WGQSHPTSTSGSMLQDTPTAAS) the composition is skewed to polar residues. Residues 38–65 (CDECRKRKLKCSGEISGCSRCIKQSLSC) constitute a DNA-binding region (zn(2)-C6 fungal-type). The span at 346 to 357 (EARQRRWHESPD) shows a compositional bias: basic and acidic residues. The segment at 346-371 (EARQRRWHESPDSHPLPPDQRLNIPS) is disordered.

Its subcellular location is the nucleus. In terms of biological role, transcription factor that is important for oxidative stress resistance and essential for gliotoxin (GT) self-protection through the regulation of a gene encoding a putative gliT homolog, even if E.nidulans does not produce gliotoxin itself. The protein is Transcription factor rglT of Emericella nidulans (strain FGSC A4 / ATCC 38163 / CBS 112.46 / NRRL 194 / M139) (Aspergillus nidulans).